Reading from the N-terminus, the 134-residue chain is Small ribosomal subunit protein uS11 (134 aa).

It belongs to the universal ribosomal protein uS11 family. As to quaternary structure, part of the 30S ribosomal subunit. Interacts with proteins S7 and S18. Binds to IF-3.

Located on the platform of the 30S subunit, it bridges several disparate RNA helices of the 16S rRNA. Forms part of the Shine-Dalgarno cleft in the 70S ribosome. The sequence is that of Small ribosomal subunit protein uS11 from Parafrankia sp. (strain EAN1pec).